Consider the following 320-residue polypeptide: o-succinylbenzoate synthase (320 aa).

Lys-133 serves as the catalytic Proton donor. Asp-161, Glu-190, and Asp-213 together coordinate Mg(2+). The active-site Proton acceptor is Lys-235.

This sequence belongs to the mandelate racemase/muconate lactonizing enzyme family. MenC type 1 subfamily. A divalent metal cation is required as a cofactor.

It catalyses the reaction (1R,6R)-6-hydroxy-2-succinyl-cyclohexa-2,4-diene-1-carboxylate = 2-succinylbenzoate + H2O. The protein operates within quinol/quinone metabolism; 1,4-dihydroxy-2-naphthoate biosynthesis; 1,4-dihydroxy-2-naphthoate from chorismate: step 4/7. It functions in the pathway quinol/quinone metabolism; menaquinone biosynthesis. Its function is as follows. Converts 2-succinyl-6-hydroxy-2,4-cyclohexadiene-1-carboxylate (SHCHC) to 2-succinylbenzoate (OSB). This is o-succinylbenzoate synthase from Salmonella heidelberg (strain SL476).